Here is a 246-residue protein sequence, read N- to C-terminus: Phycobilisome rod-core linker polypeptide CpcG2 (246 aa).

The PBS-linker domain maps to 11–189 (SSQNQRVAGY…YWRDKLENSR (179 aa)). The tract at residues 224–246 (DTTRRDRPTVPASINPTASFPLR) is disordered. Polar residues predominate over residues 235 to 246 (ASINPTASFPLR).

Belongs to the phycobilisome linker protein family. As to quaternary structure, the phycobilisome is a hemidiscoidal structure that is composed of two distinct substructures: a core complex and a number of rods radiating from the core.

It localises to the cellular thylakoid membrane. Rod-core linker protein required for attachment of phycocyanin to allophycocyanin in cores of phycobilisomes. In terms of biological role, linker polypeptides determine the state of aggregation and the location of the disk-shaped phycobiliprotein units within the phycobilisome and modulate their spectroscopic properties in order to mediate a directed and optimal energy transfer. The protein is Phycobilisome rod-core linker polypeptide CpcG2 (cpcG2) of Thermosynechococcus vestitus (strain NIES-2133 / IAM M-273 / BP-1).